The primary structure comprises 285 residues: Golgi phosphoprotein 3-like (285 aa).

The disordered stretch occupies residues 1 to 39 (MTTLTHRARRTEVGKNSEKKVESEENVNQDRNQDNEDIG). Positions 10-23 (RTEVGKNSEKKVES) are enriched in basic and acidic residues. The a 1,2-diacyl-sn-glycero-3-phospho-(1D-myo-inositol 4-phosphate) site is built by W67 and R76. Phosphoserine is present on S112. A 1,2-diacyl-sn-glycero-3-phospho-(1D-myo-inositol 4-phosphate)-binding residues include R157 and R160. Positions 176–187 (EKQNFLLFDMTT) are beta-hairpin required for oligomerization.

This sequence belongs to the GOLPH3/VPS74 family. In terms of assembly, homooligomer. Does not interact MYO18; differs from GOLPH3 by its inability to interact with MYO18. May interact with ARF1.

The protein resides in the golgi apparatus. Its subcellular location is the golgi stack membrane. The protein localises to the trans-Golgi network membrane. Phosphatidylinositol-4-phosphate-binding protein that may antagonize the action of GOLPH3 which is required for the process of vesicle budding at the Golgi and anterograde transport to the plasma membrane. The chain is Golgi phosphoprotein 3-like (GOLPH3L) from Bos taurus (Bovine).